The following is a 64-amino-acid chain: Large ribosomal subunit protein bL33 (64 aa).

It belongs to the bacterial ribosomal protein bL33 family.

This Rippkaea orientalis (strain PCC 8801 / RF-1) (Cyanothece sp. (strain PCC 8801)) protein is Large ribosomal subunit protein bL33.